A 277-amino-acid polypeptide reads, in one-letter code: MVVKIGIIKCGNIGMSPVVDLALDERADRKDIAVRVLGSGAKMDPESVEEVTKKMVEEVKPDFIIYIGPNPAAPGPKKAREILSQSGIPAVIIGDAPGLRVKDEMEQQGLGYIIIKCDPMIGARREFLDPVEMALFNADVIRVLAGTGALRIVQEAIDKMIDAVKEGKEIELPKIVITEQKAVEAMEFTNPYAKAKAMAAFTIAEKVGDVDVKGCFMTKEAEKYIPIVASAHEMIRYAAKLVDEARELEKAMDAVSRKPHHPEGKRLSKKALMEKPE.

Residues 252–277 (MDAVSRKPHHPEGKRLSKKALMEKPE) form a disordered region.

The protein belongs to the MTD family.

It catalyses the reaction 5,10-methylenetetrahydromethanopterin + oxidized coenzyme F420-(gamma-L-Glu)(n) + 2 H(+) = 5,10-methenyl-5,6,7,8-tetrahydromethanopterin + reduced coenzyme F420-(gamma-L-Glu)(n). It functions in the pathway one-carbon metabolism; methanogenesis from CO(2); 5,10-methylene-5,6,7,8-tetrahydromethanopterin from 5,10-methenyl-5,6,7,8-tetrahydromethanopterin (coenzyme F420 route): step 1/1. Functionally, catalyzes the reversible reduction of methenyl-H(4)MPT(+) to methylene-H(4)MPT. The polypeptide is F420-dependent methylenetetrahydromethanopterin dehydrogenase (mtd) (Methanocaldococcus jannaschii (strain ATCC 43067 / DSM 2661 / JAL-1 / JCM 10045 / NBRC 100440) (Methanococcus jannaschii)).